The sequence spans 76 residues: Sec-independent protein translocase protein TatA (76 aa).

Residues 1 to 21 (MGSFSIWHWLIVLVIVMLIFG) traverse the membrane as a helical segment. Residues 47 to 76 (NADKPAEEAQPTQQVGGHTIDVEVKEKTKS) are disordered. Residues 66–76 (IDVEVKEKTKS) show a composition bias toward basic and acidic residues.

The protein belongs to the TatA/E family. The Tat system comprises two distinct complexes: a TatABC complex, containing multiple copies of TatA, TatB and TatC subunits, and a separate TatA complex, containing only TatA subunits. Substrates initially bind to the TatABC complex, which probably triggers association of the separate TatA complex to form the active translocon.

The protein resides in the cell inner membrane. Its function is as follows. Part of the twin-arginine translocation (Tat) system that transports large folded proteins containing a characteristic twin-arginine motif in their signal peptide across membranes. TatA could form the protein-conducting channel of the Tat system. This is Sec-independent protein translocase protein TatA from Dechloromonas aromatica (strain RCB).